Reading from the N-terminus, the 536-residue chain is Uridine 5'-monophosphate transferase (536 aa).

The interval 22 to 84 is disordered; the sequence is ADHPTHTPED…GLQQCSSSPS (63 aa). The segment covering 31-45 has biased composition (polar residues); sequence DSPQTVPSPRSSSAH. Residues 48 to 60 are compositionally biased toward basic and acidic residues; sequence EIQELRSLQETRP. Residues 66–84 are compositionally biased toward polar residues; that stretch reads RSQSRSSKHGLQQCSSSPS. LRR repeat units lie at residues 140 to 164, 165 to 189, 191 to 211, 212 to 234, 236 to 257, and 258 to 282; these read AGQAGTQLTLRDLNLSQLPPGLHRL, AHLRDLDVADNVNLTRLPEDLSLCK, LERINADGCSIAALPSKIGAL, KNLSEISLAFNELRTLPDSIGQC, SLTTIVVPGCKINKLPASLANL, and TQLKKLDVAANIELSELSPHMNLDD. Residues 377–533 form the Fido domain; it reads ITLDRIFKLN…LEGIATVMNQ (157 aa).

It in the C-terminal section; belongs to the fic family. As to quaternary structure, interacts with several members of the Arabidopsis RLCK VIIa subfamily.

It localises to the secreted. The protein localises to the host cell. Its subcellular location is the host cell membrane. It carries out the reaction L-seryl-[protein] + UTP = O-(5'-uridylyl)-L-seryl-[protein] + diphosphate. It catalyses the reaction L-threonyl-[protein] + UTP = uridylyl-L-threonyl-[protein] + diphosphate. In terms of biological role, functions both as a virulence and an avirulence gene in Arabidopsis. Causes disease on the Kashmir (Kas) ecotype, but not on Columbia (Col-0) ecotype. Acts by directly uridylylating the conserved phosphorylation sites in the activation loop of a number of host receptor-like cytoplasmic protein kinases (RLCK), including BIK1, RIPK, PBL1 and PBL2, preventing the activation of these kinases and subsequent signal transduction. In susceptible Arabidopsis plants, uridylylation of BIK1 inhibits the PAMP-triggered immunity (PTI) signaling cascade and thereby promotes bacterial virulence. It also inhibits RPM1-dependent effector-triggered immunity (ETI) in mesophyll tissues by targeting RIPK. In contrast, in the resistant ecotype Col-0, xopAC is a major avirulence gene. Uridylylation of PBL2 triggers the PBL2-RKS1 interaction and thus the assembly of the PBL2-RKS1-ZAR1 complex, which, in turn, activates effector-triggered immunity (ETI) against X.campestris. The chain is Uridine 5'-monophosphate transferase from Xanthomonas campestris pv. campestris (strain 8004).